A 65-amino-acid polypeptide reads, in one-letter code: Large ribosomal subunit protein uL29 (65 aa).

The protein belongs to the universal ribosomal protein uL29 family.

The protein is Large ribosomal subunit protein uL29 of Acinetobacter baylyi (strain ATCC 33305 / BD413 / ADP1).